A 297-amino-acid chain; its full sequence is MTAPETLFESSLSSLRLKARGKVRDIYEAGDDLMLIVTTDRLSAFDVILPDPIPGKGRVLTRVSRFWFERLKDRVPNHLSGTPLEAVLPDPAEREQVEGRAMVVKRLRPLPVEAVVRGYLIGSGWKDYQRSGAVCGIGLPSGLRLAERLPDALFTPSTKAEMGSHDENIGFDQVVGLIGRELAERMREVALGLYREAAAYALDRGIIIADTKFEFGVDEAGVLHWIDEALTPDSSRFWPADGYRPGISPPSFDKQFVRDYLETLEWDKKPPAPHLPPDILARTAEKYREAERRLTGE.

Belongs to the SAICAR synthetase family.

The catalysed reaction is 5-amino-1-(5-phospho-D-ribosyl)imidazole-4-carboxylate + L-aspartate + ATP = (2S)-2-[5-amino-1-(5-phospho-beta-D-ribosyl)imidazole-4-carboxamido]succinate + ADP + phosphate + 2 H(+). It participates in purine metabolism; IMP biosynthesis via de novo pathway; 5-amino-1-(5-phospho-D-ribosyl)imidazole-4-carboxamide from 5-amino-1-(5-phospho-D-ribosyl)imidazole-4-carboxylate: step 1/2. The protein is Phosphoribosylaminoimidazole-succinocarboxamide synthase of Methylococcus capsulatus (strain ATCC 33009 / NCIMB 11132 / Bath).